Consider the following 331-residue polypeptide: Glyceraldehyde-3-phosphate dehydrogenase (331 aa).

Residues 11–12, aspartate 33, and arginine 78 each bind NAD(+); that span reads RI. D-glyceraldehyde 3-phosphate-binding positions include 148–150, threonine 179, 208–209, and arginine 231; these read SCT and TG. Cysteine 149 functions as the Nucleophile in the catalytic mechanism. Asparagine 313 lines the NAD(+) pocket.

It belongs to the glyceraldehyde-3-phosphate dehydrogenase family. Homotetramer.

The protein resides in the cytoplasm. It catalyses the reaction D-glyceraldehyde 3-phosphate + phosphate + NAD(+) = (2R)-3-phospho-glyceroyl phosphate + NADH + H(+). It functions in the pathway carbohydrate degradation; glycolysis; pyruvate from D-glyceraldehyde 3-phosphate: step 1/5. The chain is Glyceraldehyde-3-phosphate dehydrogenase (GPD) from Eremothecium gossypii (strain ATCC 10895 / CBS 109.51 / FGSC 9923 / NRRL Y-1056) (Yeast).